The sequence spans 68 residues: MRTSYLLLFTLCLLMSEMASGDNFLTGLGHRSDHYNCVRSGGQCLYSACPIYTKIQGTCYHGKAKCCK.

Positions methionine 1–glycine 21 are cleaved as a signal peptide. Residues aspartate 22–serine 32 constitute a propeptide that is removed on maturation. Disulfide bonds link cysteine 37/cysteine 66, cysteine 44/cysteine 59, and cysteine 49/cysteine 67.

Belongs to the beta-defensin family. In terms of assembly, monomer. Homodimer.

The protein resides in the secreted. Its subcellular location is the membrane. In terms of biological role, has bactericidal activity. May act as a ligand for C-C chemokine receptor CCR6. Positively regulates the sperm motility and bactericidal activity in a CCR6-dependent manner. Binds to CCR6 and triggers Ca2+ mobilization in the sperm which is important for its motility. This is Beta-defensin 1 (DEFB1) from Presbytis melalophos (Mitred leaf monkey).